We begin with the raw amino-acid sequence, 139 residues long: Small ribosomal subunit protein uS12 (139 aa).

The disordered stretch occupies residues 119 to 139; it reads GVDKRRQQRSAYGAKKPKPKS.

This sequence belongs to the universal ribosomal protein uS12 family. Part of the 30S ribosomal subunit. Contacts proteins S8 and S17. May interact with IF1 in the 30S initiation complex.

In terms of biological role, with S4 and S5 plays an important role in translational accuracy. Functionally, interacts with and stabilizes bases of the 16S rRNA that are involved in tRNA selection in the A site and with the mRNA backbone. Located at the interface of the 30S and 50S subunits, it traverses the body of the 30S subunit contacting proteins on the other side and probably holding the rRNA structure together. The combined cluster of proteins S8, S12 and S17 appears to hold together the shoulder and platform of the 30S subunit. The polypeptide is Small ribosomal subunit protein uS12 (Mycoplasma genitalium (strain ATCC 33530 / DSM 19775 / NCTC 10195 / G37) (Mycoplasmoides genitalium)).